Consider the following 200-residue polypeptide: Protein Rv0461 (200 aa).

Residues 47–67 (DRAGKSWPGSTPKPQEDPVGV) are disordered. Transmembrane regions (helical) follow at residues 102 to 122 (FVLV…SLFY), 134 to 154 (VFVV…LALV), and 159 to 179 (LITA…AAAA).

It is found in the cell membrane. The polypeptide is Protein Rv0461 (Mycobacterium tuberculosis (strain ATCC 25618 / H37Rv)).